The primary structure comprises 451 residues: UPF0210 protein LMHCC_2097 (451 aa).

It belongs to the UPF0210 family. Homodimer.

The sequence is that of UPF0210 protein LMHCC_2097 from Listeria monocytogenes serotype 4a (strain HCC23).